Consider the following 334-residue polypeptide: MIDEDRLISGTQKIDENFIDRAIRPKFLADYEGQPQVNKQMEIFIEAARQRNEALDHLLIFGPPGLGKTTLSHIVANELEVNIKTTSGPILEKAGDLAALLTNLEENDVLFIDEIHRLSPVVEEILYPAMEDYQLDIMIGEGPAARSIKLDLPAFTLIGATTRAGSLTSPLRDRFGIVQRLEYYDLKSLTRIVLRSAGHFKLNMSEAGAVEIARRSRGTPRIANRLLRRVRDYAQVKKANVIDDDVAKLALDMLEVDNEGFDYMDRKLLMAILDTFMGGPVGLDNLAAAIGEEKETIEDVLEPYLIQQGFLQRTPRGRIATNRTYLHFGFDKPQ.

A large ATPase domain (RuvB-L) region spans residues 4–184 (EDRLISGTQK…FGIVQRLEYY (181 aa)). Residues I23, R24, G65, K68, T69, T70, 131-133 (EDY), R174, Y184, and R221 each bind ATP. T69 contacts Mg(2+). The tract at residues 185–255 (DLKSLTRIVL…VAKLALDMLE (71 aa)) is small ATPAse domain (RuvB-S). The tract at residues 258 to 334 (NEGFDYMDRK…YLHFGFDKPQ (77 aa)) is head domain (RuvB-H). Residues R313 and R318 each contribute to the DNA site.

This sequence belongs to the RuvB family. As to quaternary structure, homohexamer. Forms an RuvA(8)-RuvB(12)-Holliday junction (HJ) complex. HJ DNA is sandwiched between 2 RuvA tetramers; dsDNA enters through RuvA and exits via RuvB. An RuvB hexamer assembles on each DNA strand where it exits the tetramer. Each RuvB hexamer is contacted by two RuvA subunits (via domain III) on 2 adjacent RuvB subunits; this complex drives branch migration. In the full resolvosome a probable DNA-RuvA(4)-RuvB(12)-RuvC(2) complex forms which resolves the HJ.

The protein localises to the cytoplasm. It carries out the reaction ATP + H2O = ADP + phosphate + H(+). Its function is as follows. The RuvA-RuvB-RuvC complex processes Holliday junction (HJ) DNA during genetic recombination and DNA repair, while the RuvA-RuvB complex plays an important role in the rescue of blocked DNA replication forks via replication fork reversal (RFR). RuvA specifically binds to HJ cruciform DNA, conferring on it an open structure. The RuvB hexamer acts as an ATP-dependent pump, pulling dsDNA into and through the RuvAB complex. RuvB forms 2 homohexamers on either side of HJ DNA bound by 1 or 2 RuvA tetramers; 4 subunits per hexamer contact DNA at a time. Coordinated motions by a converter formed by DNA-disengaged RuvB subunits stimulates ATP hydrolysis and nucleotide exchange. Immobilization of the converter enables RuvB to convert the ATP-contained energy into a lever motion, pulling 2 nucleotides of DNA out of the RuvA tetramer per ATP hydrolyzed, thus driving DNA branch migration. The RuvB motors rotate together with the DNA substrate, which together with the progressing nucleotide cycle form the mechanistic basis for DNA recombination by continuous HJ branch migration. Branch migration allows RuvC to scan DNA until it finds its consensus sequence, where it cleaves and resolves cruciform DNA. The chain is Holliday junction branch migration complex subunit RuvB from Psychromonas ingrahamii (strain DSM 17664 / CCUG 51855 / 37).